An 82-amino-acid chain; its full sequence is Small ribosomal subunit protein bS18A (82 aa).

This sequence belongs to the bacterial ribosomal protein bS18 family. As to quaternary structure, part of the 30S ribosomal subunit. Forms a tight heterodimer with protein bS6.

Binds as a heterodimer with protein bS6 to the central domain of the 16S rRNA, where it helps stabilize the platform of the 30S subunit. The sequence is that of Small ribosomal subunit protein bS18A from Streptomyces griseus subsp. griseus (strain JCM 4626 / CBS 651.72 / NBRC 13350 / KCC S-0626 / ISP 5235).